Reading from the N-terminus, the 224-residue chain is Protein GrpE (224 aa).

The interval 1-72 (MEKERDVAQE…KAKEEQNEEL (72 aa)) is disordered. The segment covering 10 to 19 (EQATYEQESP) has biased composition (polar residues). Residues 20 to 67 (NAERQEELKENEHQEKNAPEEQEKVREENGRQDAQKDEIGDPEKAKEE) show a composition bias toward basic and acidic residues.

Belongs to the GrpE family. Homodimer.

It is found in the cytoplasm. Its function is as follows. Participates actively in the response to hyperosmotic and heat shock by preventing the aggregation of stress-denatured proteins, in association with DnaK and GrpE. It is the nucleotide exchange factor for DnaK and may function as a thermosensor. Unfolded proteins bind initially to DnaJ; upon interaction with the DnaJ-bound protein, DnaK hydrolyzes its bound ATP, resulting in the formation of a stable complex. GrpE releases ADP from DnaK; ATP binding to DnaK triggers the release of the substrate protein, thus completing the reaction cycle. Several rounds of ATP-dependent interactions between DnaJ, DnaK and GrpE are required for fully efficient folding. In Parageobacillus thermoglucosidasius (Geobacillus thermoglucosidasius), this protein is Protein GrpE.